The chain runs to 235 residues: Putative uridine kinase C227.14 (235 aa).

An ATP-binding site is contributed by 36-43; it reads GGPGSGKS.

It belongs to the uridine kinase family.

It is found in the cytoplasm. The protein localises to the nucleus. It carries out the reaction uridine + ATP = UMP + ADP + H(+). The catalysed reaction is cytidine + ATP = CMP + ADP + H(+). The protein operates within pyrimidine metabolism; CTP biosynthesis via salvage pathway; CTP from cytidine: step 1/3. It participates in pyrimidine metabolism; UMP biosynthesis via salvage pathway; UMP from uridine: step 1/1. The protein is Putative uridine kinase C227.14 of Schizosaccharomyces pombe (strain 972 / ATCC 24843) (Fission yeast).